The sequence spans 142 residues: MRHYETMFILKPTLVEEEIKSKIEFYKEVITKHHGVIETSLDMGMRNLAYEIKKHKRGYYYVAYFKAEPSMIVELERLYRINEDVLRFIVIKYESKKEVEAWHALVDRANKKPSHAKEKHEKTEHTHSHHTEEAESVGSHSE.

The span at 110–133 (NKKPSHAKEKHEKTEHTHSHHTEE) shows a compositional bias: basic and acidic residues. The disordered stretch occupies residues 110-142 (NKKPSHAKEKHEKTEHTHSHHTEEAESVGSHSE).

Belongs to the bacterial ribosomal protein bS6 family.

Its function is as follows. Binds together with bS18 to 16S ribosomal RNA. In Helicobacter pylori (strain ATCC 700392 / 26695) (Campylobacter pylori), this protein is Small ribosomal subunit protein bS6 (rpsF).